The chain runs to 315 residues: Methionyl-tRNA formyltransferase (315 aa).

113 to 116 (SLLP) serves as a coordination point for (6S)-5,6,7,8-tetrahydrofolate.

It belongs to the Fmt family.

It carries out the reaction L-methionyl-tRNA(fMet) + (6R)-10-formyltetrahydrofolate = N-formyl-L-methionyl-tRNA(fMet) + (6S)-5,6,7,8-tetrahydrofolate + H(+). Attaches a formyl group to the free amino group of methionyl-tRNA(fMet). The formyl group appears to play a dual role in the initiator identity of N-formylmethionyl-tRNA by promoting its recognition by IF2 and preventing the misappropriation of this tRNA by the elongation apparatus. This chain is Methionyl-tRNA formyltransferase, found in Enterobacter sp. (strain 638).